Reading from the N-terminus, the 137-residue chain is ATP synthase epsilon chain (137 aa).

The protein belongs to the ATPase epsilon chain family. F-type ATPases have 2 components, CF(1) - the catalytic core - and CF(0) - the membrane proton channel. CF(1) has five subunits: alpha(3), beta(3), gamma(1), delta(1), epsilon(1). CF(0) has three main subunits: a, b and c.

The protein resides in the cell membrane. Its function is as follows. Produces ATP from ADP in the presence of a proton gradient across the membrane. In Desulforudis audaxviator (strain MP104C), this protein is ATP synthase epsilon chain.